The sequence spans 218 residues: Small ribosomal subunit protein uS3c (218 aa).

Residues 47–118 (IRRHMRSSSN…KLNIAIVKVA (72 aa)) enclose the KH type-2 domain.

Belongs to the universal ribosomal protein uS3 family. Part of the 30S ribosomal subunit.

It localises to the plastid. The protein localises to the chloroplast. This chain is Small ribosomal subunit protein uS3c (rps3), found in Cycas taitungensis (Prince sago).